The chain runs to 577 residues: Type I restriction enzyme MjaVII methylase subunit (577 aa).

S-adenosyl-L-methionine contacts are provided by residues 251–256, 281–283, Glu-306, and 335–336; these read EVYTPV, SGT, and DS.

The protein belongs to the N4/N6-methyltransferase family. As to quaternary structure, the type I restriction/modification system is composed of three polypeptides R, M and S.

It carries out the reaction a 2'-deoxyadenosine in DNA + S-adenosyl-L-methionine = an N(6)-methyl-2'-deoxyadenosine in DNA + S-adenosyl-L-homocysteine + H(+). The subtype gamma methyltransferase (M) subunit of a type I restriction enzyme. The M and S subunits together form a methyltransferase (MTase) that methylates A-3 on the top and bottom strands of the sequence 5'-CAAN(7)TGG-3'. In the presence of the R subunit the complex can also act as an endonuclease, binding to the same target sequence but cutting the DNA some distance from this site. Whether the DNA is cut or modified depends on the methylation state of the target sequence. When the target site is unmodified, the DNA is cut. When the target site is hemimethylated, the complex acts as a maintenance MTase modifying the DNA so that both strands become methylated. After locating a non-methylated recognition site, the enzyme complex serves as a molecular motor that translocates DNA in an ATP-dependent manner until a collision occurs that triggers cleavage. The chain is Type I restriction enzyme MjaVII methylase subunit from Methanocaldococcus jannaschii (strain ATCC 43067 / DSM 2661 / JAL-1 / JCM 10045 / NBRC 100440) (Methanococcus jannaschii).